The primary structure comprises 170 residues: MKSKLPLILINLSLISSPLGANAAKIYTCTINGETVYTTKPSKSCHSTDLPPIGNYSSERYILPQTPEPAPSPSNGGQAVKYKAPVKTVSKPAKSNTPPQQAPVNNSRRSILEAELSNERKALTEAQKMLSQARLAKGGNINHQKINALQSNVLDRQQNIQALQRELGRM.

The N-terminal stretch at 1–23 (MKSKLPLILINLSLISSPLGANA) is a signal peptide. The interval 87–107 (KTVSKPAKSNTPPQQAPVNNS) is disordered. Residues 93-107 (AKSNTPPQQAPVNNS) show a composition bias toward polar residues. Residues 109-166 (RSILEAELSNERKALTEAQKMLSQARLAKGGNINHQKINALQSNVLDRQQNIQALQRE) adopt a coiled-coil conformation.

The protein localises to the periplasm. Its function is as follows. Required for stabilizing type IV pilus (T4p) in extended, nonretracted conformation on the bacterial cell surface. The chain is Type IV pilus assembly protein C from Neisseria gonorrhoeae (strain ATCC 700825 / FA 1090).